The following is a 425-amino-acid chain: Terminal nucleotidyltransferase 5B (425 aa).

Positions 1–42 are disordered; that stretch reads MMPSESGAERRDRAAAQVGTAAATAVATAAPAGGGPDPEALS. The segment covering 15 to 31 has biased composition (low complexity); it reads AAQVGTAAATAVATAAP.

The protein belongs to the TENT family.

It localises to the cytoplasm. Its subcellular location is the nucleus. It carries out the reaction RNA(n) + ATP = RNA(n)-3'-adenine ribonucleotide + diphosphate. Functionally, catalyzes the transfer of one adenosine molecule from an ATP to an mRNA poly(A) tail bearing a 3'-OH terminal group in an ATP hydrolysis-dependent manner. May be involved in maintaining the translation efficiency of at least some genes through preventing degradation of their mRNAs. Prefers RNA molecules that are adenosine-rich close to 3'-end. In addition, may inhibit cell proliferation and cell cycle progression through ubiquitination of beta-catenin/CTNNB1. The protein is Terminal nucleotidyltransferase 5B of Homo sapiens (Human).